Here is a 428-residue protein sequence, read N- to C-terminus: Histidine--tRNA ligase (428 aa).

The protein belongs to the class-II aminoacyl-tRNA synthetase family. As to quaternary structure, homodimer.

It localises to the cytoplasm. It catalyses the reaction tRNA(His) + L-histidine + ATP = L-histidyl-tRNA(His) + AMP + diphosphate + H(+). In Chlamydia muridarum (strain MoPn / Nigg), this protein is Histidine--tRNA ligase (hisS).